The chain runs to 188 residues: MSETSKIPPASTEDTSAVVAPAAGPVSQWLQQQGFEHQALEPDHVGIEQIGVDAAVLPIIAAALKSNGFDYLQCHGGYDEGPGERLVCFYHLLAMAEQLEAMASDPAAQLREVRLKVFLSREGTPVLPSIYGLFRGADWQERETFDMYGIQFDGHPHPKRLLMPEDWKGWPLRKDYVQPDFYEMQDAY.

This sequence belongs to the complex I 30 kDa subunit family. In terms of assembly, NDH-1 can be composed of about 15 different subunits; different subcomplexes with different compositions have been identified which probably have different functions.

The protein localises to the cellular thylakoid membrane. The catalysed reaction is a plastoquinone + NADH + (n+1) H(+)(in) = a plastoquinol + NAD(+) + n H(+)(out). It catalyses the reaction a plastoquinone + NADPH + (n+1) H(+)(in) = a plastoquinol + NADP(+) + n H(+)(out). In terms of biological role, NDH-1 shuttles electrons from an unknown electron donor, via FMN and iron-sulfur (Fe-S) centers, to quinones in the respiratory and/or the photosynthetic chain. The immediate electron acceptor for the enzyme in this species is believed to be plastoquinone. Couples the redox reaction to proton translocation, and thus conserves the redox energy in a proton gradient. Cyanobacterial NDH-1 also plays a role in inorganic carbon-concentration. This is NAD(P)H-quinone oxidoreductase subunit J from Parasynechococcus marenigrum (strain WH8102).